The primary structure comprises 257 residues: Triosephosphate isomerase (257 aa).

The substrate site is built by Asn-11 and Lys-13. Residue His-96 is the Electrophile of the active site. The active-site Proton acceptor is Glu-170.

The protein belongs to the triosephosphate isomerase family. As to quaternary structure, homodimer.

The protein localises to the cytoplasm. The enzyme catalyses D-glyceraldehyde 3-phosphate = dihydroxyacetone phosphate. It catalyses the reaction dihydroxyacetone phosphate = methylglyoxal + phosphate. The protein operates within carbohydrate biosynthesis; gluconeogenesis. Its pathway is carbohydrate degradation; glycolysis; D-glyceraldehyde 3-phosphate from glycerone phosphate: step 1/1. In terms of biological role, triosephosphate isomerase is an extremely efficient metabolic enzyme that catalyzes the interconversion between dihydroxyacetone phosphate (DHAP) and D-glyceraldehyde-3-phosphate (G3P) in glycolysis and gluconeogenesis. Its function is as follows. It is also responsible for the non-negligible production of methylglyoxal a reactive cytotoxic side-product that modifies and can alter proteins, DNA and lipids. This is Triosephosphate isomerase from Giardia intestinalis (Giardia lamblia).